Here is a 223-residue protein sequence, read N- to C-terminus: Cutinase 4 (223 aa).

The first 26 residues, 1-26, serve as a signal peptide directing secretion; sequence MPLPLLPPLLLPLEALLDLALHLVDS. An intrachain disulfide couples C60 to C133. Catalysis depends on S144, which acts as the Nucleophile. A disulfide bond links C187 and C194. The active site involves D191. H203 functions as the Proton donor/acceptor in the catalytic mechanism.

Belongs to the cutinase family. The 2 disulfide bonds play a critical role in holding the catalytic residues in juxta-position; reduction of the disulfide bridges results in the complete inactivation of the enzyme.

Its subcellular location is the secreted. It catalyses the reaction cutin + H2O = cutin monomers.. Catalyzes the hydrolysis of complex carboxylic polyesters found in the cell wall of plants. Degrades cutin, a macromolecule that forms the structure of the plant cuticle. Also degrades suberin, a specialized macromolecule found in the cell wall of various plant tissues. The sequence is that of Cutinase 4 from Emericella nidulans (strain FGSC A4 / ATCC 38163 / CBS 112.46 / NRRL 194 / M139) (Aspergillus nidulans).